Here is a 157-residue protein sequence, read N- to C-terminus: NADH-quinone oxidoreductase subunit I (157 aa).

4Fe-4S ferredoxin-type domains lie at 47-78 (YLTKWNDGLERCVGCELCAIVCPAQAIYVKPA) and 94-123 (SDFQINMLRCIFCGYCEEACPTGAIVLSNQ). [4Fe-4S] cluster is bound by residues cysteine 58, cysteine 61, cysteine 64, cysteine 68, cysteine 103, cysteine 106, cysteine 109, and cysteine 113.

It belongs to the complex I 23 kDa subunit family. NDH-1 is composed of 14 different subunits. Subunits NuoA, H, J, K, L, M, N constitute the membrane sector of the complex. The cofactor is [4Fe-4S] cluster.

It localises to the cell inner membrane. It catalyses the reaction a quinone + NADH + 5 H(+)(in) = a quinol + NAD(+) + 4 H(+)(out). NDH-1 shuttles electrons from NADH, via FMN and iron-sulfur (Fe-S) centers, to quinones in the respiratory chain. The immediate electron acceptor for the enzyme in this species is believed to be ubiquinone. Couples the redox reaction to proton translocation (for every two electrons transferred, four hydrogen ions are translocated across the cytoplasmic membrane), and thus conserves the redox energy in a proton gradient. This is NADH-quinone oxidoreductase subunit I (nuoI) from Protochlamydia amoebophila (strain UWE25).